The following is a 202-amino-acid chain: MVIQRKYRASRRLGVSLWGRSKDPFNTRNYPPGQHGNMGYKKPSDFGKQFGAHKKFKFYYAISSKQMRNMFLKAYKKKGDTGDNFVGLLESMLSSVLYNSGLVPTIFSARQLISHKHVLVNGKVVNISSYSVKPGDTIKLREKAVNLPSVLAAIDAQEQKVPDYLEVDVKERSVKYLRVPKYYEVPYPANMEVNLVIEFYSR.

Residues 91–154 enclose the S4 RNA-binding domain; sequence SMLSSVLYNS…VNLPSVLAAI (64 aa).

This sequence belongs to the universal ribosomal protein uS4 family. In terms of assembly, part of the 30S ribosomal subunit. Contacts protein S5. The interaction surface between S4 and S5 is involved in control of translational fidelity.

One of the primary rRNA binding proteins, it binds directly to 16S rRNA where it nucleates assembly of the body of the 30S subunit. Its function is as follows. With S5 and S12 plays an important role in translational accuracy. The polypeptide is Small ribosomal subunit protein uS4 (Ehrlichia ruminantium (strain Gardel)).